The following is a 213-amino-acid chain: Glycerol-3-phosphate acyltransferase (213 aa).

The next 6 membrane-spanning stretches (helical) occupy residues 4-24, 48-68, 71-91, 113-133, 144-164, and 165-185; these read IILL…LWIG, ILGV…GTLA, LPLF…LAVI, VILG…IIVL, VIGA…GFIL, and TSYD…IILR.

The protein belongs to the PlsY family. As to quaternary structure, probably interacts with PlsX.

It is found in the cell membrane. The catalysed reaction is an acyl phosphate + sn-glycerol 3-phosphate = a 1-acyl-sn-glycero-3-phosphate + phosphate. The protein operates within lipid metabolism; phospholipid metabolism. Catalyzes the transfer of an acyl group from acyl-phosphate (acyl-PO(4)) to glycerol-3-phosphate (G3P) to form lysophosphatidic acid (LPA). This enzyme utilizes acyl-phosphate as fatty acyl donor, but not acyl-CoA or acyl-ACP. This is Glycerol-3-phosphate acyltransferase from Lactococcus lactis subsp. lactis (strain IL1403) (Streptococcus lactis).